The following is a 522-amino-acid chain: Glucans biosynthesis protein G (522 aa).

A signal peptide spans 1 to 33; sequence MLDNKFGFKQRVASLRWLSAAIMLSVSAVPAWA.

It belongs to the OpgD/OpgG family.

The protein resides in the periplasm. It functions in the pathway glycan metabolism; osmoregulated periplasmic glucan (OPG) biosynthesis. In terms of biological role, involved in the biosynthesis of osmoregulated periplasmic glucans (OPGs). The protein is Glucans biosynthesis protein G of Pectobacterium atrosepticum (strain SCRI 1043 / ATCC BAA-672) (Erwinia carotovora subsp. atroseptica).